The sequence spans 67 residues: Conotoxin Cal6.35 (67 aa).

Residues 1–22 (MKLTCVLIVAVLILTACQVIAA) form the signal peptide. Intrachain disulfides connect C43/C53, C46/C59, and C52/C66.

This sequence belongs to the conotoxin O1 superfamily. As to expression, expressed by the venom duct.

It is found in the secreted. Functionally, probable neurotoxin. This Californiconus californicus (California cone) protein is Conotoxin Cal6.35.